The following is a 279-amino-acid chain: MAATMADYNDQIVNETSFYNRMVLSHLLPVNLWEPLPHFLQTWLRNYLAGNILYFISGFLWCFYIYYLKLNVYVPKESIPTRKAMLLQIYVAMKAMPWYTLLPAVSEYMIEHGWTKCYSTLDHFNWFLCFLYIALYLVLVEFMIYWVHKELHDIKFLYKHLHATHHMYNKQNTLSPFAGLAFHPLDGILQAIPHVIALFIVPIHLITHLSLLFLEGIWTASIHDCIHGNIWPIMGAGYHTIHHTTYKHNYGHYTIWMDWMFGSLMVPLAEKDSFKEKEK.

2 consecutive transmembrane segments (helical) span residues 48–68 (LAGNILYFISGFLWCFYIYYL) and 127–147 (FLCFLYIALYLVLVEFMIYWV). A Fatty acid hydroxylase domain is found at 134 to 263 (ALYLVLVEFM…TIWMDWMFGS (130 aa)). A Histidine box-1 motif is present at residues 148–152 (HKELH). Residues 162–166 (HATHH) carry the Histidine box-2 motif. Residues 194 to 214 (HVIALFIVPIHLITHLSLLFL) form a helical membrane-spanning segment. Positions 239–243 (HTIHH) match the Histidine box-3 motif.

The protein belongs to the sterol desaturase family. The cofactor is Fe cation.

The protein localises to the endoplasmic reticulum membrane. It carries out the reaction a Delta(7)-sterol + 2 Fe(II)-[cytochrome b5] + O2 + 2 H(+) = a Delta(5),Delta(7)-sterol + 2 Fe(III)-[cytochrome b5] + 2 H2O. The sequence is that of Putative Delta(7)-sterol-C5(6)-desaturase 2 (HDF7) from Arabidopsis thaliana (Mouse-ear cress).